Reading from the N-terminus, the 702-residue chain is Polyribonucleotide nucleotidyltransferase (702 aa).

Mg(2+)-binding residues include Asp-486 and Asp-492. A KH domain is found at 553–612 (PSMATIKIDPEKIRDVIGKGGATIRSITEQTGASIDLDDDGTVRIYAADKASSDAALLKI). The S1 motif domain maps to 622–690 (DKLYKGKVVR…ARGRIKLSMK (69 aa)).

Belongs to the polyribonucleotide nucleotidyltransferase family. In terms of assembly, component of the RNA degradosome, which is a multiprotein complex involved in RNA processing and mRNA degradation. Mg(2+) serves as cofactor.

It is found in the cytoplasm. It carries out the reaction RNA(n+1) + phosphate = RNA(n) + a ribonucleoside 5'-diphosphate. Functionally, involved in mRNA degradation. Catalyzes the phosphorolysis of single-stranded polyribonucleotides processively in the 3'- to 5'-direction. This is Polyribonucleotide nucleotidyltransferase from Marinomonas sp. (strain MWYL1).